We begin with the raw amino-acid sequence, 132 residues long: uncharacterized protein (132 aa).

The next 3 helical transmembrane spans lie at 18-38, 50-70, and 71-91; these read MLFI…FIGI, IIYF…GVFI, and VVPL…LYLI.

Its subcellular location is the cell membrane. This is an uncharacterized protein from Bacillus subtilis (strain 168).